Reading from the N-terminus, the 355-residue chain is Putative transport protein PH1000 (355 aa).

The next 8 membrane-spanning stretches (helical) occupy residues 34 to 54 (VTWIIIITLVALAIKTILPFF), 55 to 75 (SPLFFAFITAYALYPLHIKLK), 84 to 104 (AILLTLFLLLGALMILLILVY), 158 to 178 (FSVPKYLLQVIVYLTFVYFFL), 212 to 232 (VWLLLNIVKGILMTLGFLIFK), 240 to 260 (ILAGLLTVLFSFIPLFEGWMI), 274 to 294 (IIAGIGLAVYGFTLVSPLPDF), and 310 to 330 (VLVLIGMIGGTWGLGLKGLII).

Belongs to the autoinducer-2 exporter (AI-2E) (TC 2.A.86) family.

It localises to the cell membrane. The chain is Putative transport protein PH1000 from Pyrococcus horikoshii (strain ATCC 700860 / DSM 12428 / JCM 9974 / NBRC 100139 / OT-3).